The following is a 33-amino-acid chain: GLLDTLKNMAINAAKGAGQSVLNTLSCKLSKTC.

Cys27 and Cys33 form a disulfide bridge.

Expressed by the skin glands.

The protein localises to the secreted. Its function is as follows. Has antibacterial activity against the Gram-positive bacterium S.aureus ATCC 25923 and the Gram-negative bacterium E.coli ATCC 25726. In Odorrana hosii (Hose's rock frog), this protein is Brevinin-2HSb.